We begin with the raw amino-acid sequence, 163 residues long: Translation initiation factor IF-3-like (163 aa).

The protein belongs to the IF-3 family.

The chain is Translation initiation factor IF-3-like from Nostoc sp. (strain PCC 7120 / SAG 25.82 / UTEX 2576).